Consider the following 352-residue polypeptide: Aliphatic aldoxime dehydratase (352 aa).

Serine 219 serves as a coordination point for an aliphatic aldoxime. Histidine 299 serves as a coordination point for heme b. Histidine 320 is a binding site for an aliphatic aldoxime. Residue histidine 320 is part of the active site.

Belongs to the heme-containing dehydratase family. Homodimer. The cofactor is heme b. It depends on Ca(2+) as a cofactor.

The enzyme catalyses an aliphatic aldoxime = a nitrile + H2O. Active when the heme iron is in the ferrous state. Is very sensitive to AgNO(3), is also inhibited by hydroxylamine and phenylhydrazine, and hardly inhibited by thiol reagents. Not sensitive to chelating agents and serine-modifying reagents. In terms of biological role, catalyzes the dehydration of aldoximes to their corresponding nitrile. Aliphatic aldoximes are more effective substrates than aromatic aldoximes. Shows high activity with butyraldoxime and acetaldoxime, but only weak activity with the aromatic aldoxime pyridine-2-aldoxime. Cannot use benzaldoxime, isonitrosoacetophenone and pyridine-4-aldoxime. Is involved in the metabolism of aldoxime in vivo. This is Aliphatic aldoxime dehydratase from Pseudomonas chlororaphis (Pseudomonas aureofaciens).